Consider the following 159-residue polypeptide: Nucleotide-binding protein Psyr_4087 (159 aa).

The protein belongs to the YajQ family.

In terms of biological role, nucleotide-binding protein. This chain is Nucleotide-binding protein Psyr_4087, found in Pseudomonas syringae pv. syringae (strain B728a).